The sequence spans 377 residues: DNA-directed RNA polymerase subunit alpha (377 aa).

The interval 1-259 is alpha N-terminal domain (alpha-NTD); that stretch reads MSDSSHNLLY…KHFSVFEKMD (259 aa). The segment at 276–377 is alpha C-terminal domain (alpha-CTD); it reads KDDILHKLVL…KIRSSKNTKG (102 aa).

It belongs to the RNA polymerase alpha chain family. Homodimer. The RNAP catalytic core consists of 2 alpha, 1 beta, 1 beta' and 1 omega subunit. When a sigma factor is associated with the core the holoenzyme is formed, which can initiate transcription.

The enzyme catalyses RNA(n) + a ribonucleoside 5'-triphosphate = RNA(n+1) + diphosphate. Its function is as follows. DNA-dependent RNA polymerase catalyzes the transcription of DNA into RNA using the four ribonucleoside triphosphates as substrates. This Chlamydia trachomatis serovar D (strain ATCC VR-885 / DSM 19411 / UW-3/Cx) protein is DNA-directed RNA polymerase subunit alpha.